We begin with the raw amino-acid sequence, 40 residues long: Photosystem II reaction center protein J (40 aa).

Residues 8–28 (IPLWLIGTIAGILVIGLVGIF) traverse the membrane as a helical segment.

This sequence belongs to the PsbJ family. In terms of assembly, PSII is composed of 1 copy each of membrane proteins PsbA, PsbB, PsbC, PsbD, PsbE, PsbF, PsbH, PsbI, PsbJ, PsbK, PsbL, PsbM, PsbT, PsbX, PsbY, PsbZ, Psb30/Ycf12, at least 3 peripheral proteins of the oxygen-evolving complex and a large number of cofactors. It forms dimeric complexes.

The protein resides in the plastid. It localises to the chloroplast thylakoid membrane. In terms of biological role, one of the components of the core complex of photosystem II (PSII). PSII is a light-driven water:plastoquinone oxidoreductase that uses light energy to abstract electrons from H(2)O, generating O(2) and a proton gradient subsequently used for ATP formation. It consists of a core antenna complex that captures photons, and an electron transfer chain that converts photonic excitation into a charge separation. The polypeptide is Photosystem II reaction center protein J (Anthoceros angustus (Hornwort)).